Here is a 340-residue protein sequence, read N- to C-terminus: CRISPR-associated protein Cas7 (340 aa).

Component of the Cascade-like complex (Cascade I-B), composed of Cas5, Cas6, Cas7 and crRNA.

Its subcellular location is the cytoplasm. Its function is as follows. CRISPR (clustered regularly interspaced short palindromic repeat) is an adaptive immune system that provides protection against mobile genetic elements (viruses, transposable elements and conjugative plasmids). CRISPR clusters contain sequences complementary to antecedent mobile elements and target invading nucleic acids. CRISPR clusters are transcribed and processed into CRISPR RNA (crRNA). Plasmid targeted by CRISPR locus P1 transform wild-type cells very poorly. This protein helps process or stabilize pre-crRNA into individual crRNA units, in vivo Cas6 and Cas7 are also required for optimal crRNA processing and/or stability. The polypeptide is CRISPR-associated protein Cas7 (Haloferax volcanii (strain ATCC 29605 / DSM 3757 / JCM 8879 / NBRC 14742 / NCIMB 2012 / VKM B-1768 / DS2) (Halobacterium volcanii)).